The primary structure comprises 130 residues: Small ribosomal subunit protein uS9 (130 aa).

This sequence belongs to the universal ribosomal protein uS9 family.

This Yersinia pseudotuberculosis serotype O:1b (strain IP 31758) protein is Small ribosomal subunit protein uS9.